A 424-amino-acid chain; its full sequence is Serine--tRNA ligase (424 aa).

233-235 (TAE) is a binding site for L-serine. An ATP-binding site is contributed by 264–266 (RRE). E287 contributes to the L-serine binding site. ATP is bound at residue 351–354 (EISS). An L-serine-binding site is contributed by S387.

This sequence belongs to the class-II aminoacyl-tRNA synthetase family. Type-1 seryl-tRNA synthetase subfamily. In terms of assembly, homodimer. The tRNA molecule binds across the dimer.

The protein localises to the cytoplasm. The catalysed reaction is tRNA(Ser) + L-serine + ATP = L-seryl-tRNA(Ser) + AMP + diphosphate + H(+). The enzyme catalyses tRNA(Sec) + L-serine + ATP = L-seryl-tRNA(Sec) + AMP + diphosphate + H(+). It functions in the pathway aminoacyl-tRNA biosynthesis; selenocysteinyl-tRNA(Sec) biosynthesis; L-seryl-tRNA(Sec) from L-serine and tRNA(Sec): step 1/1. Its function is as follows. Catalyzes the attachment of serine to tRNA(Ser). Is also able to aminoacylate tRNA(Sec) with serine, to form the misacylated tRNA L-seryl-tRNA(Sec), which will be further converted into selenocysteinyl-tRNA(Sec). This chain is Serine--tRNA ligase, found in Cyanothece sp. (strain PCC 7425 / ATCC 29141).